Reading from the N-terminus, the 148-residue chain is UPF0178 protein EF_0842 (148 aa).

Belongs to the UPF0178 family.

The protein is UPF0178 protein EF_0842 of Enterococcus faecalis (strain ATCC 700802 / V583).